The primary structure comprises 536 residues: Interferon alpha/beta receptor 2 (536 aa).

The signal sequence occupies residues 1–26 (MLLSQNVSAIGPLNLYPMVHISLVFG). Topologically, residues 27-246 (ISYVVPDLSD…RESESSEPAT (220 aa)) are extracellular. Cystine bridges form between C39/C122 and C85/C93. 5 N-linked (GlcNAc...) asparagine glycosylation sites follow: N58, N87, N101, N147, and N191. A disulfide bond links C210 and C230. Residues 247-267 (IGGILILFLLAAVCISTVMIL) traverse the membrane as a helical segment. The Cytoplasmic segment spans residues 268–536 (KRIGYICLRN…VRQVNLKNFN (269 aa)). Residue Y340 is modified to Phosphotyrosine. 3 consecutive repeat copies span residues 358 to 362 (SLEDC), 363 to 367 (SLEDC), and 368 to 372 (SLEDC). The segment at 358 to 372 (SLEDCSLEDCSLEDC) is 3 X 5 AA tandem repeats of S-L-E-D-C. The tract at residues 369 to 434 (LEDCSDPSAE…SDSTEGSEGR (66 aa)) is disordered. Residues 420 to 429 (TSEEDSDSTE) show a composition bias toward acidic residues. The segment at 432 to 456 (EGRIVFNVNLNSVCVRALEDDKDSE) is mediates interaction with STAT2 (and required for the recruitment of USP18). Position 480 is a phosphoserine (S480). Residues 487–522 (EEGTQLPFTDPSMECLRPQDALSDKSDTSESDVDIG) form a disordered region. The residue at position 525 (Y525) is a Phosphotyrosine.

It belongs to the type II cytokine receptor family. In terms of assembly, heterodimer with IFNAR1; forming the receptor for type I interferon. Interacts with the transcriptional factors STAT1 and STAT2. Interacts with JAK1. Interacts with USP18; indirectly via STAT2, it negatively regulates the assembly of the ternary interferon-IFNAR1-IFNAR2 complex and therefore type I interferon signaling. Post-translationally, phosphorylated on tyrosine residues upon interferon binding. Phosphorylation at Tyr-340 or Tyr-525 are sufficient to mediate interferon dependent activation of STAT1, STAT2 and STAT3 leading to antiproliferative effects on many different cell types. Expressed in the endometrium. Expressed in all tissues examined except conceptus at day 15 of pregnancy.

Its subcellular location is the cell membrane. Its function is as follows. Together with IFNAR1, forms the heterodimeric receptor for type I interferons (including interferons alpha, beta, epsilon, omega and kappa). Type I interferon binding activates the JAK-STAT signaling cascade, resulting in transcriptional activation or repression of interferon-regulated genes that encode the effectors of the interferon response. Mechanistically, type I interferon-binding brings the IFNAR1 and IFNAR2 subunits into close proximity with one another, driving their associated Janus kinases (JAKs) (TYK2 bound to IFNAR1 and JAK1 bound to IFNAR2) to cross-phosphorylate one another. The activated kinases phosphorylate specific tyrosine residues on the intracellular domains of IFNAR1 and IFNAR2, forming docking sites for the STAT transcription factors (STAT1, STAT2 and STAT). STAT proteins are then phosphorylated by the JAKs, promoting their translocation into the nucleus to regulate expression of interferon-regulated genes. In Ovis aries (Sheep), this protein is Interferon alpha/beta receptor 2 (IFNAR2).